Reading from the N-terminus, the 248-residue chain is 4-hydroxy-tetrahydrodipicolinate reductase (248 aa).

Residues G74 to T76 and S99 to F102 each bind NAD(+). H134 functions as the Proton donor/acceptor in the catalytic mechanism. Residue H135 participates in (S)-2,3,4,5-tetrahydrodipicolinate binding. The active-site Proton donor is K138. G144–T145 is a (S)-2,3,4,5-tetrahydrodipicolinate binding site.

Belongs to the DapB family.

The protein resides in the cytoplasm. The enzyme catalyses (S)-2,3,4,5-tetrahydrodipicolinate + NAD(+) + H2O = (2S,4S)-4-hydroxy-2,3,4,5-tetrahydrodipicolinate + NADH + H(+). It carries out the reaction (S)-2,3,4,5-tetrahydrodipicolinate + NADP(+) + H2O = (2S,4S)-4-hydroxy-2,3,4,5-tetrahydrodipicolinate + NADPH + H(+). It functions in the pathway amino-acid biosynthesis; L-lysine biosynthesis via DAP pathway; (S)-tetrahydrodipicolinate from L-aspartate: step 4/4. Catalyzes the conversion of 4-hydroxy-tetrahydrodipicolinate (HTPA) to tetrahydrodipicolinate. This Chlorobium phaeobacteroides (strain BS1) protein is 4-hydroxy-tetrahydrodipicolinate reductase.